The primary structure comprises 29 residues: Myosin heavy chain, muscle (29 aa).

Residues 1–16 (SKYESEGVARSEELQE) are compositionally biased toward basic and acidic residues. The disordered stretch occupies residues 1–29 (SKYESEGVARSEELQEVHQAFADAGRKPI).

In terms of assembly, muscle myosin is a hexameric protein that consists of 2 heavy chain subunits (MHC), 2 alkali light chain subunits (MLC) and 2 regulatory light chain subunits (MLC-2).

Its subcellular location is the cytoplasm. The protein localises to the myofibril. In terms of biological role, muscle contraction. In Bombyx mori (Silk moth), this protein is Myosin heavy chain, muscle.